The chain runs to 271 residues: DNA repair protein RecO (271 aa).

The protein belongs to the RecO family.

Functionally, involved in DNA repair and RecF pathway recombination. The polypeptide is DNA repair protein RecO (Rhodococcus erythropolis (strain PR4 / NBRC 100887)).